The following is a 189-amino-acid chain: Acireductone dioxygenase 1 (189 aa).

Fe(2+) contacts are provided by His-102, His-104, Glu-108, and His-146. Ni(2+) is bound by residues His-102, His-104, Glu-108, and His-146.

The protein belongs to the acireductone dioxygenase (ARD) family. As to quaternary structure, monomer. Fe(2+) serves as cofactor. Requires Ni(2+) as cofactor.

It carries out the reaction 1,2-dihydroxy-5-(methylsulfanyl)pent-1-en-3-one + O2 = 3-(methylsulfanyl)propanoate + CO + formate + 2 H(+). The enzyme catalyses 1,2-dihydroxy-5-(methylsulfanyl)pent-1-en-3-one + O2 = 4-methylsulfanyl-2-oxobutanoate + formate + 2 H(+). It participates in amino-acid biosynthesis; L-methionine biosynthesis via salvage pathway; L-methionine from S-methyl-5-thio-alpha-D-ribose 1-phosphate: step 5/6. Its function is as follows. Catalyzes 2 different reactions between oxygen and the acireductone 1,2-dihydroxy-3-keto-5-methylthiopentene (DHK-MTPene) depending upon the metal bound in the active site. Fe-containing acireductone dioxygenase (Fe-ARD) produces formate and 2-keto-4-methylthiobutyrate (KMTB), the alpha-ketoacid precursor of methionine in the methionine recycle pathway. Ni-containing acireductone dioxygenase (Ni-ARD) produces methylthiopropionate, carbon monoxide and formate, and does not lie on the methionine recycle pathway. The protein is Acireductone dioxygenase 1 of Nocardia farcinica (strain IFM 10152).